Reading from the N-terminus, the 192-residue chain is Probable apo-citrate lyase phosphoribosyl-dephospho-CoA transferase (192 aa).

It belongs to the CitX family.

It catalyses the reaction apo-[citrate lyase ACP] + 2'-(5''-triphospho-alpha-D-ribosyl)-3'-dephospho-CoA = holo-[citrate lyase ACP] + diphosphate. Its function is as follows. Transfers 2-(5''-triphosphoribosyl)-3'-dephosphocoenzyme-A on a serine residue to the apo-acyl carrier protein (gamma chain) of the citrate lyase to yield holo-acyl carrier protein. The sequence is that of Probable apo-citrate lyase phosphoribosyl-dephospho-CoA transferase from Streptococcus pyogenes serotype M18 (strain MGAS8232).